We begin with the raw amino-acid sequence, 153 residues long: Small ribosomal subunit protein uS17 (153 aa).

This sequence belongs to the universal ribosomal protein uS17 family.

The chain is Small ribosomal subunit protein uS17 (RpS11) from Anopheles gambiae (African malaria mosquito).